A 387-amino-acid chain; its full sequence is TPR repeat-containing protein SYNPCC7002_A0425 (387 aa).

TPR repeat units lie at residues 63 to 96, 97 to 130, 132 to 164, 166 to 198, 200 to 232, 233 to 266, 267 to 300, 302 to 334, and 336 to 368; these read LNAL…EANN, ARIH…EDDN, EFFN…QPNN, AYSL…DSNN, MALQ…RPND, AELR…STRD, SAMQ…DPQS, EAFA…SPTD, and AAFY…YQQR.

The protein is TPR repeat-containing protein SYNPCC7002_A0425 of Picosynechococcus sp. (strain ATCC 27264 / PCC 7002 / PR-6) (Agmenellum quadruplicatum).